Reading from the N-terminus, the 346-residue chain is Aldose 1-epimerase (346 aa).

Arg-79 provides a ligand contact to substrate. The Proton donor role is filled by His-175. Asp-245 provides a ligand contact to substrate. The active-site Proton acceptor is the Glu-309.

The protein belongs to the aldose epimerase family.

Its subcellular location is the cytoplasm. The catalysed reaction is alpha-D-glucose = beta-D-glucose. The protein operates within carbohydrate metabolism; hexose metabolism. Functionally, mutarotase converts alpha-aldose to the beta-anomer. It is active on D-glucose, L-arabinose, D-xylose, D-galactose, maltose and lactose. The polypeptide is Aldose 1-epimerase (galM) (Escherichia coli (strain K12)).